Consider the following 817-residue polypeptide: Cargo-transport protein YPP1 (817 aa).

The protein belongs to the YPP1 family. As to quaternary structure, interacts with ribosomes.

It localises to the cytoplasmic granule. The protein localises to the cell membrane. Its function is as follows. Involved in endocytosis. This Saccharomyces cerevisiae (strain ATCC 204508 / S288c) (Baker's yeast) protein is Cargo-transport protein YPP1 (YPP1).